The following is a 291-amino-acid chain: Nucleoid occlusion protein (291 aa).

Residues glutamate 155–leucine 174 constitute a DNA-binding region (H-T-H motif).

It belongs to the ParB family.

It localises to the cytoplasm. Its subcellular location is the nucleoid. Functionally, effects nucleoid occlusion by binding relatively nonspecifically to DNA and preventing the assembly of the division machinery in the vicinity of the nucleoid, especially under conditions that disturb the cell cycle. It helps to coordinate cell division and chromosome segregation by preventing the formation of the Z ring through the nucleoid, which would cause chromosome breakage. This chain is Nucleoid occlusion protein, found in Bacillus pumilus (strain SAFR-032).